A 528-amino-acid chain; its full sequence is Phosphoenolpyruvate carboxykinase (ATP) (528 aa).

The substrate site is built by Arg-56, Tyr-192, and Lys-198. ATP-binding positions include Lys-198, His-217, and 233–241 (GLSGTGKTT). Lys-198 and His-217 together coordinate Mn(2+). Asp-254 contributes to the Mn(2+) binding site. ATP-binding residues include Glu-282, Arg-319, and Thr-444. Arg-319 contacts substrate.

It belongs to the phosphoenolpyruvate carboxykinase (ATP) family. Mn(2+) is required as a cofactor.

The protein resides in the cytoplasm. It catalyses the reaction oxaloacetate + ATP = phosphoenolpyruvate + ADP + CO2. The protein operates within carbohydrate biosynthesis; gluconeogenesis. In terms of biological role, involved in the gluconeogenesis. Catalyzes the conversion of oxaloacetate (OAA) to phosphoenolpyruvate (PEP) through direct phosphoryl transfer between the nucleoside triphosphate and OAA. This chain is Phosphoenolpyruvate carboxykinase (ATP), found in Bacillus anthracis (strain A0248).